The sequence spans 198 residues: Synaptobrevin homolog YKT6-B (198 aa).

Residues 8-127 form the Longin domain; sequence VLYKGENKVH…IQYNALDSYL (120 aa). The region spanning 138–198 is the v-SNARE coiled-coil homology domain; that stretch reads PMSKVQAELD…RKQNSCCDIM (61 aa). A lipid anchor (S-palmitoyl cysteine) is attached at cysteine 194. Residue cysteine 195 is modified to Cysteine methyl ester. A lipid anchor (S-farnesyl cysteine) is attached at cysteine 195. Residues 196–198 constitute a propeptide, removed in mature form; it reads DIM.

The protein belongs to the synaptobrevin family. In terms of processing, palmitoylated; catalyzes its own palmitoylation. Palmitoylation is required for Golgi targeting. Post-translationally, farnesylation is required for Golgi targeting.

The protein resides in the cytoplasm. The protein localises to the cytosol. It localises to the cytoplasmic vesicle membrane. It is found in the golgi apparatus membrane. Functionally, vesicular soluble NSF attachment protein receptor (v-SNARE) mediating vesicle docking and fusion to a specific acceptor cellular compartment. Functions in endoplasmic reticulum to Golgi transport; as part of a SNARE complex composed of GOSR1, GOSR2 and STX5. Functions in early/recycling endosome to TGN transport; as part of a SNARE complex composed of BET1L, GOSR1 and STX5. Has a S-palmitoyl transferase activity. The polypeptide is Synaptobrevin homolog YKT6-B (ykt6-b) (Xenopus laevis (African clawed frog)).